We begin with the raw amino-acid sequence, 153 residues long: Ribosome maturation factor RimP (153 aa).

The protein belongs to the RimP family.

The protein localises to the cytoplasm. Its function is as follows. Required for maturation of 30S ribosomal subunits. The polypeptide is Ribosome maturation factor RimP (Solibacter usitatus (strain Ellin6076)).